Reading from the N-terminus, the 469-residue chain is 3-isopropylmalate dehydratase large subunit (469 aa).

[4Fe-4S] cluster contacts are provided by cysteine 349, cysteine 410, and cysteine 413.

This sequence belongs to the aconitase/IPM isomerase family. LeuC type 1 subfamily. Heterodimer of LeuC and LeuD. The cofactor is [4Fe-4S] cluster.

It catalyses the reaction (2R,3S)-3-isopropylmalate = (2S)-2-isopropylmalate. Its pathway is amino-acid biosynthesis; L-leucine biosynthesis; L-leucine from 3-methyl-2-oxobutanoate: step 2/4. Functionally, catalyzes the isomerization between 2-isopropylmalate and 3-isopropylmalate, via the formation of 2-isopropylmaleate. In Neisseria gonorrhoeae (strain ATCC 700825 / FA 1090), this protein is 3-isopropylmalate dehydratase large subunit.